The following is a 290-amino-acid chain: Arylamine N-acetyltransferase 1 (290 aa).

Position 1 is an N-acetylmethionine (methionine 1). Cysteine 68 serves as the catalytic Acyl-thioester intermediate. Serine 103 is a binding site for CoA. Residue 106–107 (VH) coordinates substrate. Catalysis depends on residues histidine 107 and aspartate 122. Residue tyrosine 208 coordinates CoA.

It belongs to the arylamine N-acetyltransferase family.

It localises to the cytoplasm. It carries out the reaction an arylamine + acetyl-CoA = an N-acetylarylamine + CoA. Functionally, participates in the detoxification of a plethora of hydrazine and arylamine drugs. Acetylates both arylamines and arylalkylamines. The sequence is that of Arylamine N-acetyltransferase 1 (Nat1) from Rattus norvegicus (Rat).